A 102-amino-acid chain; its full sequence is ATP-dependent Clp protease adapter protein ClpS (102 aa).

It belongs to the ClpS family. In terms of assembly, binds to the N-terminal domain of the chaperone ClpA.

Its function is as follows. Involved in the modulation of the specificity of the ClpAP-mediated ATP-dependent protein degradation. This is ATP-dependent Clp protease adapter protein ClpS from Herminiimonas arsenicoxydans.